Consider the following 731-residue polypeptide: Inclusion body clearance protein IML2 (731 aa).

Positions 1 to 26 are disordered; that stretch reads MFRVFGSFGSKGNQSSGEEQSTKTKQ. A compositionally biased stretch (polar residues) spans 10–26; sequence SKGNQSSGEEQSTKTKQ. Phosphoserine is present on residues S265, S268, and S378. T380 is modified (phosphothreonine). Phosphoserine is present on residues S383 and S392.

The protein belongs to the IML2 family. As to quaternary structure, interacts with lipid droplet proteins PET10 and PDR16.

The protein resides in the cytoplasm. The protein localises to the nucleus. Inclusion body (IB) resident protein that interacts strongly with lipid droplet (LD) proteins. Involved in LD-mediated IB clearing after protein folding stress, probably by enabling access to the IBs of an LD-stored soluble sterol derivative that acts as a chaperone in inclusion clearing. The protein is Inclusion body clearance protein IML2 of Saccharomyces cerevisiae (strain ATCC 204508 / S288c) (Baker's yeast).